The chain runs to 434 residues: Serine--tRNA ligase (434 aa).

241-243 (TAE) is a binding site for L-serine. 272 to 274 (RSE) is an ATP binding site. Glu295 contacts L-serine. 359–362 (EISS) lines the ATP pocket. Ser395 is an L-serine binding site.

It belongs to the class-II aminoacyl-tRNA synthetase family. Type-1 seryl-tRNA synthetase subfamily. As to quaternary structure, homodimer. The tRNA molecule binds across the dimer.

Its subcellular location is the cytoplasm. The enzyme catalyses tRNA(Ser) + L-serine + ATP = L-seryl-tRNA(Ser) + AMP + diphosphate + H(+). It carries out the reaction tRNA(Sec) + L-serine + ATP = L-seryl-tRNA(Sec) + AMP + diphosphate + H(+). Its pathway is aminoacyl-tRNA biosynthesis; selenocysteinyl-tRNA(Sec) biosynthesis; L-seryl-tRNA(Sec) from L-serine and tRNA(Sec): step 1/1. Its function is as follows. Catalyzes the attachment of serine to tRNA(Ser). Is also able to aminoacylate tRNA(Sec) with serine, to form the misacylated tRNA L-seryl-tRNA(Sec), which will be further converted into selenocysteinyl-tRNA(Sec). This Glaesserella parasuis serovar 5 (strain SH0165) (Haemophilus parasuis) protein is Serine--tRNA ligase.